The chain runs to 238 residues: Probable metal transport system ATP-binding protein TP_0035 (238 aa).

In terms of domain architecture, ABC transporter spans 10–231; that stretch reads VLLQNVSFRY…LDMQKKDALA (222 aa). An ATP-binding site is contributed by 44-51; it reads GENGSGKS.

This sequence belongs to the ABC transporter superfamily.

It localises to the cell inner membrane. Its function is as follows. Part of an ATP-driven transport system TP_0034/TP_0035/TP_0036 for a metal. Probably responsible for energy coupling to the transport system. This chain is Probable metal transport system ATP-binding protein TP_0035, found in Treponema pallidum (strain Nichols).